We begin with the raw amino-acid sequence, 914 residues long: PHD finger protein 14 (914 aa).

A disordered region spans residues 19-276 (DALDYDSSDD…EDSLLERPQT (258 aa)). The segment covering 53–68 (ESAAGSESDSDAAAAS) has biased composition (low complexity). Residues 90-102 (EKVKESFSEETSS) show a composition bias toward basic and acidic residues. 2 stretches are compositionally biased toward acidic residues: residues 155–168 (ELNE…EDDN) and 191–233 (GEED…DSEE). The PHD-type 1 zinc finger occupies 285 to 346 (ILICCVCLGD…PWFCDACKNG (62 aa)). Cys-288, Cys-291, Cys-305, Cys-308, His-313, Cys-316, Cys-340, Cys-343, Cys-351, Cys-354, His-371, Cys-374, Cys-407, Cys-410, Cys-424, Cys-429, His-434, Cys-437, Cys-461, and His-464 together coordinate Zn(2+). Residues 348–381 (SPSCELCPSQDGIFKETDAGRWVHVVCALYVPGV) form a C2HC pre-PHD-type zinc finger. A PHD-type 2 zinc finger spans residues 405–465 (KECSLCEDTR…PFFAYCKQHA (61 aa)). Residues 596–644 (MIQIQDNIVEQKNLKDKLESEQEKLHMEYDKLCESLEDLQNVNGQLRTE) are a coiled coil. The segment at 692-746 (LYSCGICKKNQDQHLLLLCDTCKLHYHLGCLDPPLTRMPKKTKNSYWQCSECDQA) adopts a PHD-type 3 zinc-finger fold. Residues Cys-695, Cys-698, Cys-710, Cys-713, His-718, Cys-721, Cys-740, and Cys-743 each coordinate Zn(2+). The interval 777-838 (PQEMSPEPKK…PKADDTRTEC (62 aa)) is disordered. Basic residues predominate over residues 792–802 (TRTRGQKRKRM). Over residues 803-817 (SICEEEKMEEPLPRE) the composition is skewed to basic and acidic residues. The PHD-type 4 zinc finger occupies 835–888 (RTECTTCKGPGDNENLVRCDECRLCYHFGCLDPPLKKSPKQTGYGWICQECDTS). Zn(2+) is bound by residues Cys-838, Cys-841, Cys-853, Cys-856, His-861, Cys-864, Cys-882, and Cys-885. The interval 887-914 (TSSSKEEEAQEVEEESVNEETAEQEIPD) is disordered. The span at 894–914 (EAQEVEEESVNEETAEQEIPD) shows a compositional bias: acidic residues.

As to quaternary structure, interacts with histone H3.

Its subcellular location is the nucleus. Histone-binding protein. Binds preferentially to unmodified histone H3 but can also bind to a lesser extent to histone H3 trimethylated at 'Lys-9' (H3K9me3) as well as to histone H3 monomethylated at 'Lys-27' (H3K27ac) and trimethylated at 'Lys-27' (H3K27me3). Represses PDGFRA expression, thus playing a role in regulation of mesenchymal cell proliferation. In Danio rerio (Zebrafish), this protein is PHD finger protein 14.